The following is a 161-amino-acid chain: Allophycocyanin beta chain (161 aa).

An N4-methylasparagine modification is found at Asn71. Cys81 is a (2R,3E)-phycocyanobilin binding site.

It belongs to the phycobiliprotein family. In terms of assembly, heterodimer of an alpha and a beta chain. In terms of processing, contains one covalently linked phycocyanobilin chromophore.

The protein localises to the cellular thylakoid membrane. In terms of biological role, light-harvesting photosynthetic bile pigment-protein from the phycobiliprotein complex. Allophycocyanin has a maximum absorption at approximately 650 nanometers. The chain is Allophycocyanin beta chain (apcB) from Synechococcus sp. (strain ATCC 27144 / PCC 6301 / SAUG 1402/1) (Anacystis nidulans).